The following is a 953-amino-acid chain: Glutamate receptor 3.5 (953 aa).

The N-terminal stretch at 1–29 is a signal peptide; sequence MGFFVMIRDVSMGFMLLCISALWVLPIQG. At 30 to 606 the chain is on the extracellular side; the sequence is AGRESFSRNS…SPWSFLKPFT (577 aa). Asn-38, Asn-95, Asn-223, Asn-371, Asn-397, Asn-436, Asn-454, and Asn-569 each carry an N-linked (GlcNAc...) asparagine glycan. The helical transmembrane segment at 607–627 threads the bilayer; that stretch reads IEMWAVTGALFLFVGAVIWIL. The Cytoplasmic segment spans residues 628 to 636; sequence EHRFNEEFR. The helical transmembrane segment at 637–657 threads the bilayer; sequence GPPRRQIITVFWFSFSTMFFS. The Cytoplasmic portion of the chain corresponds to 658–668; the sequence is HRENTVSTLGR. Residues 669–689 form a helical membrane-spanning segment; the sequence is FVLLVWLFVVLIINSSYTASL. At 690 to 850 the chain is on the extracellular side; the sequence is TSILTVQQLT…TENYQISVQS (161 aa). Residues 851-871 traverse the membrane as a helical segment; sequence FWGLFLICGVVWFIALTLFCW. The Cytoplasmic segment spans residues 872 to 953; the sequence is KVFWQYQRLR…SQSKDHETPQ (82 aa). Positions 928–953 are disordered; the sequence is EKSSKKLKDGQSSAENSQSKDHETPQ.

This sequence belongs to the glutamate-gated ion channel (TC 1.A.10.1) family. In terms of assembly, may form heteromers. Expressed predominantly in roots. Also detected in shoots.

It localises to the membrane. In terms of biological role, glutamate-gated receptor that probably acts as a non-selective cation channel. May be involved in light-signal transduction and calcium homeostasis via the regulation of calcium influx into cells. In Arabidopsis thaliana (Mouse-ear cress), this protein is Glutamate receptor 3.5 (GLR3.5).